Consider the following 583-residue polypeptide: Cell division protein FtsZ (583 aa).

Residues 24 to 28, 111 to 113, Glu142, Arg146, and Asp190 contribute to the GTP site; these read GGGGN and GTG. 2 disordered regions span residues 391 to 425 and 510 to 583; these read HQQPSQDFRPQSKLFASSPAEAPAALRPAQPVQQA and TNSL…RQSN. Low complexity predominate over residues 412–425; sequence APAALRPAQPVQQA.

This sequence belongs to the FtsZ family. In terms of assembly, homodimer. Polymerizes to form a dynamic ring structure in a strictly GTP-dependent manner. Interacts directly with several other division proteins.

The protein resides in the cytoplasm. Essential cell division protein that forms a contractile ring structure (Z ring) at the future cell division site. The regulation of the ring assembly controls the timing and the location of cell division. One of the functions of the FtsZ ring is to recruit other cell division proteins to the septum to produce a new cell wall between the dividing cells. Binds GTP and shows GTPase activity. The protein is Cell division protein FtsZ of Rhizobium radiobacter (Agrobacterium tumefaciens).